The following is a 465-amino-acid chain: MKKVVTRFAPSPTGQLHIGGARTALFSWLLARHFDGIFHLRIEDTDLERSKQEYTDTILESMSWLGLNWDGEIVYQSKRNERYHEVIDILLQTGHAYWCHCSIEQIEKMREEARQKGEKPRYNGCCREKKLSANPSGVVRLKVPSAGQVTFNDLVKGQVTVQNTELDDMVLQRSDGTPTYQLAVVVDDHDMQVTHIIRGDDHVSNTPKQILIYNALGWEIPIFGHIPMILGSDRQKLSKRHGARAVIEYQEDGFLPEAMLNYLVRLGWSYGDQEIFTLQELISFFDGTNLHSAPAAFNIEKLLWLNAHYLRRLPVSQIANLMLPFVRKEGFTHITKERIEAVLPLYVERADTLKELVYLMKPVLISASDLTYKEDDIKKIVTNESKEHLDRLRNLLEAEINFEPLYIEQLIHEYITSNNLKFKEIGPILRLAVSGVLGGPSLQELIVVIGKKEVLARLDKLRFQL.

Positions 10-20 (PSPTGQLHIGG) match the 'HIGH' region motif. 4 residues coordinate Zn(2+): Cys-99, Cys-101, Cys-126, and Glu-128. The 'KMSKS' region signature appears at 236-240 (KLSKR). Lys-239 lines the ATP pocket.

The protein belongs to the class-I aminoacyl-tRNA synthetase family. Glutamate--tRNA ligase type 1 subfamily. Monomer. It depends on Zn(2+) as a cofactor.

It is found in the cytoplasm. The catalysed reaction is tRNA(Glu) + L-glutamate + ATP = L-glutamyl-tRNA(Glu) + AMP + diphosphate. Catalyzes the attachment of glutamate to tRNA(Glu) in a two-step reaction: glutamate is first activated by ATP to form Glu-AMP and then transferred to the acceptor end of tRNA(Glu). The sequence is that of Glutamate--tRNA ligase from Lawsonia intracellularis (strain PHE/MN1-00).